Consider the following 418-residue polypeptide: Glutamyl-tRNA reductase (418 aa).

Residues 49–52, Ser107, 112–114, and Gln118 contribute to the substrate site; these read TCNR and EPQ. Cys50 (nucleophile) is an active-site residue. Residue 187-192 coordinates NADP(+); that stretch reads GAGETI.

This sequence belongs to the glutamyl-tRNA reductase family. As to quaternary structure, homodimer.

The catalysed reaction is (S)-4-amino-5-oxopentanoate + tRNA(Glu) + NADP(+) = L-glutamyl-tRNA(Glu) + NADPH + H(+). It functions in the pathway porphyrin-containing compound metabolism; protoporphyrin-IX biosynthesis; 5-aminolevulinate from L-glutamyl-tRNA(Glu): step 1/2. Functionally, catalyzes the NADPH-dependent reduction of glutamyl-tRNA(Glu) to glutamate 1-semialdehyde (GSA). This Pseudoalteromonas translucida (strain TAC 125) protein is Glutamyl-tRNA reductase.